The sequence spans 866 residues: Protein SEY1 (866 aa).

At methionine 1–glutamine 746 the chain is on the cytoplasmic side. The region spanning glycine 48 to alanine 305 is the GB1/RHD3-type G domain. Residue glycine 58–serine 65 coordinates GTP. The stretch at serine 480–arginine 506 forms a coiled coil. The helical transmembrane segment at isoleucine 747–leucine 767 threads the bilayer. The Lumenal portion of the chain corresponds to arginine 768–proline 770. The chain crosses the membrane as a helical span at residues valine 771–leucine 791. Residues tryptophan 792–tryptophan 866 lie on the Cytoplasmic side of the membrane. Positions serine 840–tryptophan 866 are disordered. Over residues arginine 854 to tryptophan 866 the composition is skewed to acidic residues.

The protein belongs to the TRAFAC class dynamin-like GTPase superfamily. GB1/RHD3 GTPase family. RHD3 subfamily.

It is found in the endoplasmic reticulum membrane. Its function is as follows. Cooperates with the reticulon proteins and tubule-shaping DP1 family proteins to generate and maintain the structure of the tubular endoplasmic reticulum network. Has GTPase activity, which is required for its function in ER organization. The protein is Protein SEY1 of Coccidioides immitis (strain RS) (Valley fever fungus).